A 374-amino-acid chain; its full sequence is LRR repeats and ubiquitin-like domain-containing protein At2g30105 (374 aa).

One can recognise a Ubiquitin-like domain in the interval Ile-13 to His-87. LRR repeat units follow at residues Trp-128–Cys-151, Gly-152–Phe-175, Ser-177–Ser-200, Leu-201–Leu-224, Thr-225–Thr-248, Leu-250–Cys-270, Phe-272–Leu-293, Arg-294–Met-316, and Leu-318–Gly-340.

In Arabidopsis thaliana (Mouse-ear cress), this protein is LRR repeats and ubiquitin-like domain-containing protein At2g30105.